A 215-amino-acid polypeptide reads, in one-letter code: Proteasome subunit beta type-1 (215 aa).

Methionine 1 carries the post-translational modification N-acetylmethionine. Positions methionine 1–glycine 19 are cleaved as a propeptide — removed in mature form. Threonine 20 (nucleophile) is an active-site residue.

Belongs to the peptidase T1B family. As to quaternary structure, the 26S proteasome consists of a 20S proteasome core and two 19S regulatory subunits. The 20S proteasome core is composed of 28 subunits that are arranged in four stacked rings, resulting in a barrel-shaped structure. The two end rings are each formed by seven alpha subunits, and the two central rings are each formed by seven beta subunits. The catalytic chamber with the active sites is on the inside of the barrel.

The protein localises to the cytoplasm. It localises to the nucleus. The catalysed reaction is Cleavage of peptide bonds with very broad specificity.. Its function is as follows. The proteasome degrades poly-ubiquitinated proteins in the cytoplasm and in the nucleus. It is essential for the regulated turnover of proteins and for the removal of misfolded proteins. The proteasome is a multicatalytic proteinase complex that is characterized by its ability to cleave peptides with Arg, Phe, Tyr, Leu, and Glu adjacent to the leaving group at neutral or slightly basic pH. It has an ATP-dependent proteolytic activity. PRE3 and PRE4 are necessary for the peptidyl-glutamyl-peptide-hydrolyzing activity. In terms of biological role, this subunit is necessary for the peptidylglutamyl-peptide hydrolyzing activity. This Saccharomyces cerevisiae (strain ATCC 204508 / S288c) (Baker's yeast) protein is Proteasome subunit beta type-1 (PRE3).